The chain runs to 428 residues: 3-phosphoshikimate 1-carboxyvinyltransferase (428 aa).

3 residues coordinate 3-phosphoshikimate: K22, S23, and R27. K22 contacts phosphoenolpyruvate. Phosphoenolpyruvate-binding residues include G96 and R124. 3-phosphoshikimate contacts are provided by S169, S170, Q171, S197, D313, N336, and K340. Residue Q171 participates in phosphoenolpyruvate binding. The active-site Proton acceptor is the D313. Phosphoenolpyruvate contacts are provided by R344, R386, and K411.

It belongs to the EPSP synthase family. As to quaternary structure, monomer.

It localises to the cytoplasm. The catalysed reaction is 3-phosphoshikimate + phosphoenolpyruvate = 5-O-(1-carboxyvinyl)-3-phosphoshikimate + phosphate. It functions in the pathway metabolic intermediate biosynthesis; chorismate biosynthesis; chorismate from D-erythrose 4-phosphate and phosphoenolpyruvate: step 6/7. In terms of biological role, catalyzes the transfer of the enolpyruvyl moiety of phosphoenolpyruvate (PEP) to the 5-hydroxyl of shikimate-3-phosphate (S3P) to produce enolpyruvyl shikimate-3-phosphate and inorganic phosphate. The protein is 3-phosphoshikimate 1-carboxyvinyltransferase of Proteus mirabilis (strain HI4320).